The chain runs to 161 residues: Protein OPG060 (161 aa).

The protein belongs to the orthopoxvirus OPG058 family.

In Homo sapiens (Human), this protein is Protein OPG060 (OPG060).